Consider the following 277-residue polypeptide: Hydroxypyruvate/pyruvate aldolase (277 aa).

The active-site Proton acceptor is His-54. 2 residues coordinate a divalent metal cation: Glu-158 and Asp-184.

Belongs to the HpcH/HpaI aldolase family. A divalent metal cation serves as cofactor.

The enzyme catalyses D-glyceraldehyde + 3-hydroxypyruvate = (3R,4S,5R)-3,4,5,6-tetrahydroxy-2-oxohexanoate. It catalyses the reaction D-glyceraldehyde + 3-hydroxypyruvate = 2-dehydro-D-gluconate. It carries out the reaction D-glyceraldehyde + 3-hydroxypyruvate = 2-dehydro-D-galactonate. The catalysed reaction is D-glyceraldehyde + pyruvate = 2-dehydro-3-deoxy-L-galactonate. In terms of biological role, aldolase which can catalyze in vitro the aldolisation reaction between hydroxypyruvate (HPA) or pyruvate (PA) and D-glyceraldehyde (D-GA). The condensation of hydroxypyruvate and D-glyceraldehyde produces (3R,4S,5R)-3,4,5,6-tetrahydroxy-2-oxohexanoate as the major product, 2-dehydro-D-gluconate and 2-dehydro-D-galactonate. The condensation of pyruvate and D-glyceraldehyde produces 2-dehydro-3-deoxy-L-galactonate as the major product. The sequence is that of Hydroxypyruvate/pyruvate aldolase from Deinococcus radiodurans (strain ATCC 13939 / DSM 20539 / JCM 16871 / CCUG 27074 / LMG 4051 / NBRC 15346 / NCIMB 9279 / VKM B-1422 / R1).